Reading from the N-terminus, the 354-residue chain is Guanine nucleotide-binding protein G(i) subunit alpha (354 aa).

Gly2 carries N-myristoyl glycine lipidation. A lipid anchor (S-palmitoyl cysteine) is attached at Cys3. The G-alpha domain occupies 32–354 (REVKLLLLGA…KNNLKDCGLF (323 aa)). Residues 35 to 48 (KLLLLGAGESGKST) are G1 motif. GTP contacts are provided by residues 40 to 47 (GAGESGKS), 175 to 181 (LRTRVKT), 200 to 204 (DVGGQ), 269 to 272 (NKKD), and Ala326. Ser47 and Thr181 together coordinate Mg(2+). A G2 motif region spans residues 173-181 (DVLRTRVKT). The tract at residues 196–205 (FKMFDVGGQR) is G3 motif. The interval 265 to 272 (ILFLNKKD) is G4 motif. Residues 324-329 (TCATDT) are G5 motif.

It belongs to the G-alpha family. G(i/o/t/z) subfamily. As to quaternary structure, g proteins are composed of 3 units; alpha, beta and gamma. The alpha chain contains the guanine nucleotide binding site.

Its function is as follows. Guanine nucleotide-binding proteins (G proteins) are involved as modulators or transducers in various transmembrane signaling systems. The G(i) proteins are involved in hormonal regulation of adenylate cyclase: they inhibit the cyclase in response to beta-adrenergic stimuli. The sequence is that of Guanine nucleotide-binding protein G(i) subunit alpha from Lymnaea stagnalis (Great pond snail).